Reading from the N-terminus, the 1009-residue chain is UvrABC system protein A (1009 aa).

32–39 (GLSGSGKS) is a binding site for ATP. ABC transporter domains are found at residues 314 to 592 (WSHG…AESQ) and 612 to 941 (RDPS…KFLR). 645 to 652 (GVSGSGKS) lines the ATP pocket. The C4-type zinc finger occupies 744-770 (CENCSGDGTIKIEMNFLPDVYVPCEVC). A disordered region spans residues 956 to 1009 (KAPRKTAARKTAAAKSTTKKTATVRTTNNTATKKAAAVTKKTAPAKKTTRARKA). The segment covering 964–997 (RKTAAAKSTTKKTATVRTTNNTATKKAAAVTKKT) has biased composition (low complexity). Basic residues predominate over residues 998–1009 (APAKKTTRARKA).

This sequence belongs to the ABC transporter superfamily. UvrA family. As to quaternary structure, forms a heterotetramer with UvrB during the search for lesions.

Its subcellular location is the cytoplasm. The UvrABC repair system catalyzes the recognition and processing of DNA lesions. UvrA is an ATPase and a DNA-binding protein. A damage recognition complex composed of 2 UvrA and 2 UvrB subunits scans DNA for abnormalities. When the presence of a lesion has been verified by UvrB, the UvrA molecules dissociate. The chain is UvrABC system protein A from Streptomyces avermitilis (strain ATCC 31267 / DSM 46492 / JCM 5070 / NBRC 14893 / NCIMB 12804 / NRRL 8165 / MA-4680).